The sequence spans 102 residues: Large ribosomal subunit protein uL24 (102 aa).

The protein belongs to the universal ribosomal protein uL24 family. Part of the 50S ribosomal subunit.

Functionally, one of two assembly initiator proteins, it binds directly to the 5'-end of the 23S rRNA, where it nucleates assembly of the 50S subunit. In terms of biological role, one of the proteins that surrounds the polypeptide exit tunnel on the outside of the subunit. This chain is Large ribosomal subunit protein uL24, found in Rhizobium etli (strain CIAT 652).